We begin with the raw amino-acid sequence, 404 residues long: tRNA pseudouridine(31) synthase (404 aa).

Residue D168 is part of the active site.

The protein belongs to the pseudouridine synthase RluA family.

Its subcellular location is the cytoplasm. The protein resides in the mitochondrion. The catalysed reaction is uridine(31) in tRNA = pseudouridine(31) in tRNA. Functionally, catalyzes the formation of pseudouridine at position 31 in the psi GC loop of tRNAS. The chain is tRNA pseudouridine(31) synthase (PUS6) from Saccharomyces cerevisiae (strain ATCC 204508 / S288c) (Baker's yeast).